The following is a 54-amino-acid chain: IAIVDCSDYPKPVCSLEYMPLCGSDSKTYSNKCDFCNAFVDSNGTLSLSHFGKC.

Positions 4 to 54 constitute a Kazal-like domain; sequence VDCSDYPKPVCSLEYMPLCGSDSKTYSNKCDFCNAFVDSNGTLSLSHFGKC. Disulfide bonds link C6–C36, C14–C33, and C22–C54. N43 is a glycosylation site (N-linked (GlcNAc...) asparagine).

It is found in the secreted. In Circus aeruginosus (Western marsh harrier), this protein is Ovomucoid.